The primary structure comprises 1481 residues: Cystic fibrosis transmembrane conductance regulator (1481 aa).

Over 1 to 77 the chain is Cytoplasmic; the sequence is MQKSPLEKAG…KLINALRRCF (77 aa). A helical membrane pass occupies residues 78-98; that stretch reads FWRFMFYGILLYLGEVTKAVQ. An ABC transmembrane type-1 1 domain is found at 81–365; the sequence is FMFYGILLYL…WAVQTWYDSL (285 aa). Over 99 to 122 the chain is Extracellular; that stretch reads PLLLGRIIASYDPDNKVERSIAIY. The chain crosses the membrane as a helical span at residues 123-146; that stretch reads LGIGLCLLFVVRTLLLHPAIFGLH. Residues 147–195 are Cytoplasmic-facing; the sequence is HIGMQMRIAMFSLIYKKTLKLSSRVLDKISIGQLISLLSNNLNKFDEGL. Residues 196 to 216 traverse the membrane as a helical segment; the sequence is ALAHFVWISPLQVTLLMGLLW. Residues 217–222 are Extracellular-facing; it reads ELLQAS. A helical transmembrane segment spans residues 223–243; sequence AFCGLAFLIVLALVQAGLGRM. At 244–298 the chain is on the cytoplasmic side; sequence MMKYRDQRAGKINERLVITSEMIENIQSVKAYCWEEAMEKMIENLRQTELKLTRK. Residues 299–319 traverse the membrane as a helical segment; that stretch reads AAYVRYFNSSAFFFSGFFVVF. The Extracellular segment spans residues 320 to 339; sequence LSVLPYALTKGIILRKIFTT. A helical transmembrane segment spans residues 340–358; sequence ISFCIVLRMAVTRQFPWAV. The Cytoplasmic segment spans residues 359 to 858; the sequence is QTWYDSLGAI…YLRYITVHRS (500 aa). Residues Trp-401, Ser-434, 458-465, and Gln-493 contribute to the ATP site; that span reads GSTGAGKT. Residues 423–646 enclose the ABC transporter 1 domain; that stretch reads NGDNNLFFSN…RPDFSSKLMG (224 aa). Cys-524 is lipidated: S-palmitoyl cysteine. Phosphoserine is present on residues Ser-549 and Ser-660. The tract at residues 654 to 831 is disordered R region; it reads SAERRNSILT…EEINEEDLKE (178 aa). At Ser-670 the chain carries Phosphoserine; by PKA. Ser-686 is modified (phosphoserine). Lys-688 is covalently cross-linked (Glycyl lysine isopeptide (Lys-Gly) (interchain with G-Cter in ubiquitin)). A phosphoserine mark is found at Ser-700 and Ser-712. Thr-717 carries the post-translational modification Phosphothreonine. 5 positions are modified to phosphoserine: Ser-737, Ser-768, Ser-790, Ser-795, and Ser-813. Residues 859–879 traverse the membrane as a helical segment; the sequence is LIFVLIWCIVIFLAEVAASLV. Residues 859 to 1155 form the ABC transmembrane type-1 2 domain; the sequence is LIFVLIWCIV…AVNSSIDVDS (297 aa). The Extracellular segment spans residues 880–918; the sequence is VLWLFGNTAPQDKENSTKSGNSSYAVIITNTSSYYFFYI. N-linked (GlcNAc...) asparagine glycosylation is found at Asn-894, Asn-900, and Asn-909. The chain crosses the membrane as a discontinuously helical span at residues 919–939; sequence YVGVADTLLALGLFRGLPLVH. Residues 940–990 lie on the Cytoplasmic side of the membrane; that stretch reads TLITVSKILHHKMLHSVLQAPMSTLNTLKAGGILNRFSKDIAILDDLLPLT. The helical transmembrane segment at 991–1011 threads the bilayer; the sequence is IFDFIQLLLIVVGAIAVVSVL. Residues 1012–1013 lie on the Extracellular side of the membrane; the sequence is QP. The chain crosses the membrane as a helical span at residues 1014–1034; sequence YIFLATVPVIAAFILLRAYFL. The Cytoplasmic portion of the chain corresponds to 1035 to 1095; that stretch reads HTSQQLKQLE…TANWFLYLST (61 aa). A helical membrane pass occupies residues 1096 to 1116; the sequence is LRWFQMRIEMIFVLFFIAVAF. Residues 1117-1130 are Extracellular-facing; sequence ISILTTGEGEGRVG. A helical membrane pass occupies residues 1131-1151; that stretch reads IILTLAMNIMSTLQWAVNSSI. The Cytoplasmic segment spans residues 1152–1481; sequence DVDSLMRSVS…AEEEVQGTRL (330 aa). The region spanning 1199–1444 is the ABC transporter 2 domain; the sequence is VKKDDVWPSG…KSLFRQAISS (246 aa). ATP contacts are provided by residues Tyr-1220 and 1245–1252; that span reads GRTGSGKS. Residues 1387–1481 are interaction with GORASP2; that stretch reads RTLKQAFADC…AEEEVQGTRL (95 aa). A lipid anchor (S-palmitoyl cysteine) is attached at Cys-1396. A phosphoserine mark is found at Ser-1445 and Ser-1457. The disordered stretch occupies residues 1449–1481; that stretch reads KLFPHRNSSKHKSRPQITALKEEAEEEVQGTRL. Positions 1450–1462 are enriched in basic residues; that stretch reads LFPHRNSSKHKSR. Residues 1471-1481 are compositionally biased toward acidic residues; it reads EAEEEVQGTRL. Residues 1479–1481 carry the PDZ-binding motif; it reads TRL.

Belongs to the ABC transporter superfamily. ABCC family. CFTR transporter (TC 3.A.1.202) subfamily. Monomer; does not require oligomerization for channel activity. May form oligomers in the membrane. Interacts with SLC26A3, SLC26A6 and NHERF1. Interacts with SHANK2. Interacts with MYO6. Interacts (via C-terminus) with GOPC (via PDZ domain); this promotes CFTR internalization and thereby decreases channel activity. Interacts with SLC4A7 through NHERF1. Found in a complex with MYO5B and RAB11A. Interacts with ANO1. Interacts with SLC26A8. Interacts with AHCYL1; the interaction increases CFTR activity. Interacts with CSE1L. The core-glycosylated form interacts with GORASP2 (via PDZ GRASP-type 1 domain) in respone to ER stress. Interacts with MARCHF2; the interaction leads to CFTR ubiqtuitination and degradation. Interacts with ADGRG2. N-glycosylated. Post-translationally, phosphorylated; cAMP treatment promotes phosphorylation and activates the channel. Dephosphorylation decreases the ATPase activity (in vitro). Phosphorylation at PKA sites activates the channel. Phosphorylation at PKC sites enhances the response to phosphorylation by PKA. Phosphorylated by AMPK; this inhibits channel activity. In terms of processing, ubiquitinated, leading to its degradation in the lysosome. Deubiquitination by USP10 in early endosomes enhances its endocytic recycling to the cell membrane. Ubiquitinated by RNF185 during ER stress. Ubiquitinated by MARCHF2. As to expression, isoform 1 is expressed in the pancreas. Isoform 2 is specifically expressed in the ventricle.

Its subcellular location is the apical cell membrane. The protein localises to the early endosome membrane. It localises to the cell membrane. It is found in the recycling endosome membrane. The protein resides in the endoplasmic reticulum membrane. Its subcellular location is the nucleus. The enzyme catalyses ATP + H2O + closed Cl(-) channel = ADP + phosphate + open Cl(-) channel.. The catalysed reaction is chloride(in) = chloride(out). It catalyses the reaction hydrogencarbonate(in) = hydrogencarbonate(out). It carries out the reaction ATP + H2O = ADP + phosphate + H(+). Functionally, epithelial ion channel that plays an important role in the regulation of epithelial ion and water transport and fluid homeostasis. Mediates the transport of chloride ions across the cell membrane. Possesses an intrinsic ATPase activity and utilizes ATP to gate its channel; the passive flow of anions through the channel is gated by cycles of ATP binding and hydrolysis by the ATP-binding domains. The ion channel is also permeable to HCO(3)(-); selectivity depends on the extracellular chloride concentration. Exerts its function also by modulating the activity of other ion channels and transporters. Contributes to the regulation of the pH and the ion content of the epithelial fluid layer. Modulates the activity of the epithelial sodium channel (ENaC) complex, in part by regulating the cell surface expression of the ENaC complex. May regulate bicarbonate secretion and salvage in epithelial cells by regulating the transporter SLC4A7. Can inhibit the chloride channel activity of ANO1. Plays a role in the chloride and bicarbonate homeostasis during sperm epididymal maturation and capacitation. The sequence is that of Cystic fibrosis transmembrane conductance regulator from Oryctolagus cuniculus (Rabbit).